We begin with the raw amino-acid sequence, 378 residues long: UDP-N-acetylglucosamine--N-acetylmuramyl-(pentapeptide) pyrophosphoryl-undecaprenol N-acetylglucosamine transferase (378 aa).

UDP-N-acetyl-alpha-D-glucosamine contacts are provided by residues 14-16 (TGG), Asn-125, Arg-165, Ser-193, and Gln-293.

The protein belongs to the glycosyltransferase 28 family. MurG subfamily.

The protein localises to the cell inner membrane. The catalysed reaction is di-trans,octa-cis-undecaprenyl diphospho-N-acetyl-alpha-D-muramoyl-L-alanyl-D-glutamyl-meso-2,6-diaminopimeloyl-D-alanyl-D-alanine + UDP-N-acetyl-alpha-D-glucosamine = di-trans,octa-cis-undecaprenyl diphospho-[N-acetyl-alpha-D-glucosaminyl-(1-&gt;4)]-N-acetyl-alpha-D-muramoyl-L-alanyl-D-glutamyl-meso-2,6-diaminopimeloyl-D-alanyl-D-alanine + UDP + H(+). The protein operates within cell wall biogenesis; peptidoglycan biosynthesis. Cell wall formation. Catalyzes the transfer of a GlcNAc subunit on undecaprenyl-pyrophosphoryl-MurNAc-pentapeptide (lipid intermediate I) to form undecaprenyl-pyrophosphoryl-MurNAc-(pentapeptide)GlcNAc (lipid intermediate II). This Bartonella tribocorum (strain CIP 105476 / IBS 506) protein is UDP-N-acetylglucosamine--N-acetylmuramyl-(pentapeptide) pyrophosphoryl-undecaprenol N-acetylglucosamine transferase.